A 111-amino-acid chain; its full sequence is ATP-dependent Clp protease adapter protein ClpS (111 aa).

The protein belongs to the ClpS family. As to quaternary structure, binds to the N-terminal domain of the chaperone ClpA.

Its function is as follows. Involved in the modulation of the specificity of the ClpAP-mediated ATP-dependent protein degradation. In Legionella pneumophila (strain Corby), this protein is ATP-dependent Clp protease adapter protein ClpS.